The following is a 193-amino-acid chain: ATP-dependent Clp protease proteolytic subunit (193 aa).

Residue S98 is the Nucleophile of the active site. Residue H123 is part of the active site.

This sequence belongs to the peptidase S14 family. Fourteen ClpP subunits assemble into 2 heptameric rings which stack back to back to give a disk-like structure with a central cavity, resembling the structure of eukaryotic proteasomes.

Its subcellular location is the cytoplasm. The catalysed reaction is Hydrolysis of proteins to small peptides in the presence of ATP and magnesium. alpha-casein is the usual test substrate. In the absence of ATP, only oligopeptides shorter than five residues are hydrolyzed (such as succinyl-Leu-Tyr-|-NHMec, and Leu-Tyr-Leu-|-Tyr-Trp, in which cleavage of the -Tyr-|-Leu- and -Tyr-|-Trp bonds also occurs).. In terms of biological role, cleaves peptides in various proteins in a process that requires ATP hydrolysis. Has a chymotrypsin-like activity. Plays a major role in the degradation of misfolded proteins. In Clostridium acetobutylicum (strain ATCC 824 / DSM 792 / JCM 1419 / IAM 19013 / LMG 5710 / NBRC 13948 / NRRL B-527 / VKM B-1787 / 2291 / W), this protein is ATP-dependent Clp protease proteolytic subunit.